Consider the following 340-residue polypeptide: Olfactory receptor 5T3 (340 aa).

At 1–55 (MDSTFTGYNLYNLQVKTEMDKLSSGLDIYRNPLKNKTEVTMFILTGFTDDFELQV) the chain is on the extracellular side. Residue Asn-35 is glycosylated (N-linked (GlcNAc...) asparagine). A helical transmembrane segment spans residues 56 to 76 (FLFLLFFAIYLFTLIGNLGLV). Residues 77 to 84 (VLVIEDSW) are Cytoplasmic-facing. Residues 85-105 (LHNPMYYFLSVLSFLDACYST) traverse the membrane as a helical segment. Residues 106-129 (VVTPKMLVNFLAKNKSISFIGCAT) are Extracellular-facing. N-linked (GlcNAc...) asparagine glycosylation occurs at Asn-119. A disulfide bridge links Cys-127 with Cys-219. The chain crosses the membrane as a helical span at residues 130 to 150 (QMLLFVTFGTTECFLLAAMAY). Residues 151–169 (DHYVAIYNPLLYSVSMSPR) lie on the Cytoplasmic side of the membrane. A helical transmembrane segment spans residues 170–190 (VYVPLITASYVAGILHATIHI). Residues 191–226 (VATFSLSFCGSNEIRHVFCDMPPLLAISCSDTHTNQ) are Extracellular-facing. A helical transmembrane segment spans residues 227 to 247 (LLLFYFVGSIEIVTILIVLIS). Residues 248 to 267 (CDFILLSILKMHSAKGRQKA) are Cytoplasmic-facing. The helical transmembrane segment at 268-288 (FSTCGSHLTGVTIYHGTILVS) threads the bilayer. At 289 to 301 (YMRPSSSYASDHD) the chain is on the extracellular side. The chain crosses the membrane as a helical span at residues 302 to 322 (IIVSIFYTIVIPKLNPIIYSL). Residues 323-340 (RNKEVKKAVKKMLKLVYK) lie on the Cytoplasmic side of the membrane.

Belongs to the G-protein coupled receptor 1 family.

It is found in the cell membrane. In terms of biological role, odorant receptor. The protein is Olfactory receptor 5T3 (OR5T3) of Homo sapiens (Human).